Consider the following 174-residue polypeptide: uncharacterized protein (174 aa).

A helical transmembrane segment spans residues 7 to 27 (LIILAIFTLWVGGFGYYLYLI).

It is found in the membrane. This is an uncharacterized protein from Rickettsia prowazekii (strain Madrid E).